The primary structure comprises 99 residues: Transmembrane protein 14A (99 aa).

The next 3 membrane-spanning stretches (helical) occupy residues 1–21 (MDLI…LGYK), 24–44 (GGVP…YGAY), and 79–99 (PAGL…LLLL).

It belongs to the TMEM14 family.

The protein localises to the mitochondrion membrane. The protein resides in the endoplasmic reticulum membrane. Its function is as follows. Inhibits apoptosis via negative regulation of the mitochondrial outer membrane permeabilization involved in apoptotic signaling pathway. The sequence is that of Transmembrane protein 14A (TMEM14A) from Sus scrofa (Pig).